Reading from the N-terminus, the 40-residue chain is Adenylate kinase (40 aa).

10 to 15 (GAGKGT) contacts ATP. An NMP region spans residues 30–40 (STGDMFIKAIK). T31 is an AMP binding site.

It belongs to the adenylate kinase family. Monomer.

It is found in the cytoplasm. The catalysed reaction is AMP + ATP = 2 ADP. It functions in the pathway purine metabolism; AMP biosynthesis via salvage pathway; AMP from ADP: step 1/1. Its function is as follows. Catalyzes the reversible transfer of the terminal phosphate group between ATP and AMP. Plays an important role in cellular energy homeostasis and in adenine nucleotide metabolism. This Staphylococcus carnosus protein is Adenylate kinase (adk).